A 443-amino-acid polypeptide reads, in one-letter code: Dynein regulatory complex protein 9 (443 aa).

Disordered stretches follow at residues Met-1 to Glu-34 and Gly-415 to Lys-443. The IQ domain occupies Glu-393 to Lys-422. Residues Gly-415 to Gly-430 show a composition bias toward basic and acidic residues. Basic residues predominate over residues Lys-431 to Lys-443.

Belongs to the DRC9 family. In terms of assembly, component of the nexin-dynein regulatory complex (N-DRC). Interacts (via IQ domain) with CALM when calcium levels are low. Does not interact with CALM in the presence of Ca(2+). Interacts with the HSP70 proteins HSPA1L and HSPA8. May form a complex with CAMK4 and HSP70.

The protein localises to the cytoplasm. It is found in the cell projection. It localises to the cilium. Its subcellular location is the flagellum. The protein resides in the cytoskeleton. The protein localises to the flagellum axoneme. Component of the nexin-dynein regulatory complex (N-DRC), a key regulator of ciliary/flagellar motility which maintains the alignment and integrity of the distal axoneme and regulates microtubule sliding in motile axonemes. Binds calmodulin when cellular Ca(2+) levels are low and thereby contributes to the regulation of calcium and calmodulin-dependent protein kinase IV (CAMK4) activity; contributes to the regulation of CAMK4 signaling cascades. Required for normal axoneme assembly in sperm flagella, normal sperm tail formation and for male fertility. The protein is Dynein regulatory complex protein 9 (IQCG) of Homo sapiens (Human).